Reading from the N-terminus, the 129-residue chain is Small ribosomal subunit protein uS11 (129 aa).

This sequence belongs to the universal ribosomal protein uS11 family. In terms of assembly, part of the 30S ribosomal subunit. Interacts with proteins S7 and S18. Binds to IF-3.

Functionally, located on the platform of the 30S subunit, it bridges several disparate RNA helices of the 16S rRNA. Forms part of the Shine-Dalgarno cleft in the 70S ribosome. The chain is Small ribosomal subunit protein uS11 from Bradyrhizobium diazoefficiens (strain JCM 10833 / BCRC 13528 / IAM 13628 / NBRC 14792 / USDA 110).